The following is a 395-amino-acid chain: Endophilin-B2 (395 aa).

Residue Met1 is modified to N-acetylmethionine. The segment at 1-27 is membrane-binding amphipathic helix; it reads MDFNMKKLASDAGIFFTRAVQFTEEKF. At Ser10 the chain carries Phosphoserine. The BAR domain occupies 24–287; sequence EEKFGQAEKT…LGRFPGTFVG (264 aa). 2 coiled-coil regions span residues 116 to 132 and 206 to 240; these read IKVAEAEKHLGAAERDF and ASALWNDEVDKAEQELRVAQTEFDRQAEVTRLLLE. The region spanning 335 to 395 is the SH3 domain; the sequence is SGTRKARVLY…VPVTYLELLS (61 aa). Ser395 bears the Phosphoserine mark.

The protein belongs to the endophilin family. In terms of assembly, homodimer, and heterodimer with SH3GLB1.

The protein resides in the cytoplasm. The chain is Endophilin-B2 (SH3GLB2) from Bos taurus (Bovine).